We begin with the raw amino-acid sequence, 334 residues long: Fructose-1,6-bisphosphatase class 1 (334 aa).

Mg(2+) contacts are provided by E89, D112, L114, and D115. Substrate-binding positions include 115-118 (DGSS), N208, Y241, 259-261 (YLY), and K271. E277 is a binding site for Mg(2+).

This sequence belongs to the FBPase class 1 family. As to quaternary structure, homotetramer. Mg(2+) serves as cofactor.

The protein resides in the cytoplasm. It carries out the reaction beta-D-fructose 1,6-bisphosphate + H2O = beta-D-fructose 6-phosphate + phosphate. It functions in the pathway carbohydrate biosynthesis; gluconeogenesis. The chain is Fructose-1,6-bisphosphatase class 1 from Pectobacterium atrosepticum (strain SCRI 1043 / ATCC BAA-672) (Erwinia carotovora subsp. atroseptica).